Consider the following 385-residue polypeptide: uncharacterized protein (385 aa).

An N6-(pyridoxal phosphate)lysine modification is found at lysine 194.

It belongs to the class-V pyridoxal-phosphate-dependent aminotransferase family. Requires pyridoxal 5'-phosphate as cofactor.

This is an uncharacterized protein from Methanocaldococcus jannaschii (strain ATCC 43067 / DSM 2661 / JAL-1 / JCM 10045 / NBRC 100440) (Methanococcus jannaschii).